A 221-amino-acid polypeptide reads, in one-letter code: Succinate--CoA ligase [ADP-forming] subunit beta, mitochondrial (221 aa).

The ATP-grasp domain maps to 1 to 122 (DVVIKAQVLA…DSNSAYRQKI (122 aa)). Lys-5 is an ATP binding site. 2 positions are modified to N6-acetyllysine: Lys-22 and Lys-26. A Phosphoserine modification is found at Ser-114. Position 139 is a phosphothreonine (Thr-139). Residue 171 to 173 (GIM) participates in substrate binding. The residue at position 196 (Lys-196) is an N6-acetyllysine.

Belongs to the succinate/malate CoA ligase beta subunit family. ATP-specific subunit beta subfamily. Heterodimer of an alpha and a beta subunit. The beta subunit determines specificity for ATP. Interacts with ALAS2.

The protein resides in the mitochondrion. It catalyses the reaction succinate + ATP + CoA = succinyl-CoA + ADP + phosphate. The protein operates within carbohydrate metabolism; tricarboxylic acid cycle; succinate from succinyl-CoA (ligase route): step 1/1. In terms of biological role, ATP-specific succinyl-CoA synthetase functions in the citric acid cycle (TCA), coupling the hydrolysis of succinyl-CoA to the synthesis of ATP and thus represents the only step of substrate-level phosphorylation in the TCA. The beta subunit provides nucleotide specificity of the enzyme and binds the substrate succinate, while the binding sites for coenzyme A and phosphate are found in the alpha subunit. The polypeptide is Succinate--CoA ligase [ADP-forming] subunit beta, mitochondrial (Mesocricetus auratus (Golden hamster)).